The chain runs to 201 residues: L(+)-tartrate dehydratase subunit beta (201 aa).

His-37 is an active-site residue.

It belongs to the class-I fumarase family. As to quaternary structure, heterotetramer of two alpha and two beta subunits.

It carries out the reaction (2R,3R)-tartrate = oxaloacetate + H2O. The polypeptide is L(+)-tartrate dehydratase subunit beta (ttdB) (Shigella boydii serotype 4 (strain Sb227)).